The following is a 396-amino-acid chain: Probable splicing factor YJU2B (396 aa).

The segment at 1 to 26 is disordered; sequence MGERKGVNKYYPPDFNPEKHGSLNRY. Position 40 is a phosphoserine (Ser-40). Residues 182 to 214 are a coiled coil; it reads LNSMLRRRFREKKKAIQEEEERDQALQAKASLT. The tract at residues 295–396 is disordered; sequence IVRRRSRDVP…VADYSDSESE (102 aa). Phosphoserine is present on Ser-306. Residues 315–327 show a composition bias toward basic and acidic residues; it reads KSGEPRVPEEAAQ. The span at 340–350 shows a compositional bias: polar residues; the sequence is TTETPKCSSPR. Ser-362 bears the Phosphoserine mark.

It belongs to the CWC16 family.

It localises to the nucleus. Its function is as follows. May be involved in mRNA splicing. The chain is Probable splicing factor YJU2B from Homo sapiens (Human).